The primary structure comprises 459 residues: Exodeoxyribonuclease 7 large subunit (459 aa).

It belongs to the XseA family. As to quaternary structure, heterooligomer composed of large and small subunits.

The protein resides in the cytoplasm. The enzyme catalyses Exonucleolytic cleavage in either 5'- to 3'- or 3'- to 5'-direction to yield nucleoside 5'-phosphates.. In terms of biological role, bidirectionally degrades single-stranded DNA into large acid-insoluble oligonucleotides, which are then degraded further into small acid-soluble oligonucleotides. The polypeptide is Exodeoxyribonuclease 7 large subunit (Pseudomonas savastanoi pv. phaseolicola (strain 1448A / Race 6) (Pseudomonas syringae pv. phaseolicola (strain 1448A / Race 6))).